The following is a 363-amino-acid chain: Probable transglycosylase BTH_I0986 (363 aa).

It belongs to the glycosyltransferase group 1 family. Glycosyltransferase 4 subfamily.

Functionally, probably a transglycosylase. Probably involved in synthesis of the outer membrane receptor for a cellular contact-dependent growth inhibition (CDI) system. This Burkholderia thailandensis (strain ATCC 700388 / DSM 13276 / CCUG 48851 / CIP 106301 / E264) protein is Probable transglycosylase BTH_I0986.